Consider the following 348-residue polypeptide: Dihydroorotase (348 aa).

The Zn(2+) site is built by His14 and His16. Substrate contacts are provided by residues 16 to 18 (HLR) and Asn42. Residues Lys100, His137, and His175 each contribute to the Zn(2+) site. The residue at position 100 (Lys100) is an N6-carboxylysine. His137 contacts substrate. Substrate is bound at residue Leu220. Asp248 contacts Zn(2+). The active site involves Asp248. Substrate is bound by residues His252 and Ala264.

Belongs to the metallo-dependent hydrolases superfamily. DHOase family. Class II DHOase subfamily. Homodimer. It depends on Zn(2+) as a cofactor.

It catalyses the reaction (S)-dihydroorotate + H2O = N-carbamoyl-L-aspartate + H(+). The protein operates within pyrimidine metabolism; UMP biosynthesis via de novo pathway; (S)-dihydroorotate from bicarbonate: step 3/3. In terms of biological role, catalyzes the reversible cyclization of carbamoyl aspartate to dihydroorotate. This Pseudomonas putida (strain W619) protein is Dihydroorotase.